The primary structure comprises 625 residues: Probable potassium transport system protein Kup 2 (625 aa).

12 consecutive transmembrane segments (helical) span residues 15–35 (LSFA…LYAF), 52–72 (ILSL…LVIV), 98–118 (GGWL…DGIL), 134–154 (LSPN…FFLF), 164–184 (IGIY…VLGF), 203–223 (IYFF…VFLV), 246–266 (WFAV…AFVL), 284–304 (FLPV…QAII), 336–356 (VYLP…VVIF), 365–385 (AYGI…GIIA), 394–414 (FKVM…AGNI), and 417–437 (LLTG…VMYT).

The protein belongs to the HAK/KUP transporter (TC 2.A.72) family.

Its subcellular location is the cell inner membrane. The catalysed reaction is K(+)(in) + H(+)(in) = K(+)(out) + H(+)(out). Transport of potassium into the cell. Likely operates as a K(+):H(+) symporter. In Legionella pneumophila subsp. pneumophila (strain Philadelphia 1 / ATCC 33152 / DSM 7513), this protein is Probable potassium transport system protein Kup 2.